We begin with the raw amino-acid sequence, 437 residues long: Chromosomal replication initiator protein DnaA (437 aa).

The tract at residues 1–74 is domain I, interacts with DnaA modulators; the sequence is MNLAWNKILE…EACGDKIPVE (74 aa). The domain II stretch occupies residues 74–98; that stretch reads EILIETKATSPLQSFLEKSFDQKDF. The tract at residues 99–315 is domain III, AAA+ region; the sequence is QFNPDYTFET…GALNDIYLYK (217 aa). The ATP site is built by G142, G144, K145, and T146. A domain IV, binds dsDNA region spans residues 316 to 437; sequence KSYSLLFLNL…ERISSKYKLQ (122 aa).

This sequence belongs to the DnaA family. Oligomerizes as a right-handed, spiral filament on DNA at oriC.

Its subcellular location is the cytoplasm. Plays an essential role in the initiation and regulation of chromosomal replication. ATP-DnaA binds to the origin of replication (oriC) to initiate formation of the DNA replication initiation complex once per cell cycle. Binds the DnaA box (a 9 base pair repeat at the origin) and separates the double-stranded (ds)DNA. Forms a right-handed helical filament on oriC DNA; dsDNA binds to the exterior of the filament while single-stranded (ss)DNA is stabiized in the filament's interior. The ATP-DnaA-oriC complex binds and stabilizes one strand of the AT-rich DNA unwinding element (DUE), permitting loading of DNA polymerase. After initiation quickly degrades to an ADP-DnaA complex that is not apt for DNA replication. Binds acidic phospholipids. The polypeptide is Chromosomal replication initiator protein DnaA (Leptospira borgpetersenii serovar Hardjo-bovis (strain JB197)).